The following is a 118-amino-acid chain: Large ribosomal subunit protein uL22 (118 aa).

This sequence belongs to the universal ribosomal protein uL22 family. In terms of assembly, part of the 50S ribosomal subunit.

In terms of biological role, this protein binds specifically to 23S rRNA; its binding is stimulated by other ribosomal proteins, e.g. L4, L17, and L20. It is important during the early stages of 50S assembly. It makes multiple contacts with different domains of the 23S rRNA in the assembled 50S subunit and ribosome. Its function is as follows. The globular domain of the protein is located near the polypeptide exit tunnel on the outside of the subunit, while an extended beta-hairpin is found that lines the wall of the exit tunnel in the center of the 70S ribosome. This is Large ribosomal subunit protein uL22 from Levilactobacillus brevis (strain ATCC 367 / BCRC 12310 / CIP 105137 / JCM 1170 / LMG 11437 / NCIMB 947 / NCTC 947) (Lactobacillus brevis).